We begin with the raw amino-acid sequence, 231 residues long: Ribose-5-phosphate isomerase A (231 aa).

Substrate is bound by residues 28-31 (TGST), 83-86 (DGAD), and 96-99 (KGGG). Residue E105 is the Proton acceptor of the active site. K123 provides a ligand contact to substrate.

It belongs to the ribose 5-phosphate isomerase family. Homodimer.

The enzyme catalyses aldehydo-D-ribose 5-phosphate = D-ribulose 5-phosphate. The protein operates within carbohydrate degradation; pentose phosphate pathway; D-ribose 5-phosphate from D-ribulose 5-phosphate (non-oxidative stage): step 1/1. In terms of biological role, catalyzes the reversible conversion of ribose-5-phosphate to ribulose 5-phosphate. The protein is Ribose-5-phosphate isomerase A of Parvibaculum lavamentivorans (strain DS-1 / DSM 13023 / NCIMB 13966).